Here is a 718-residue protein sequence, read N- to C-terminus: Catalase-peroxidase (718 aa).

The segment at residues 98–219 (WHAAGTYRMG…LAATEMGLIY (122 aa)) is a cross-link (tryptophyl-tyrosyl-methioninium (Trp-Tyr) (with M-245)). The active-site Proton acceptor is His99. A cross-link (tryptophyl-tyrosyl-methioninium (Tyr-Met) (with W-98)) is located at residues 219–245 (YVNPEGPQASGDPRSAAPFIRATFGNM). A heme b-binding site is contributed by His260.

The protein belongs to the peroxidase family. Peroxidase/catalase subfamily. Homodimer or homotetramer. The cofactor is heme b. In terms of processing, formation of the three residue Trp-Tyr-Met cross-link is important for the catalase, but not the peroxidase activity of the enzyme.

The enzyme catalyses H2O2 + AH2 = A + 2 H2O. It catalyses the reaction 2 H2O2 = O2 + 2 H2O. Functionally, bifunctional enzyme with both catalase and broad-spectrum peroxidase activity. The protein is Catalase-peroxidase of Acinetobacter baumannii (strain ACICU).